The sequence spans 201 residues: dITP/XTP pyrophosphatase (201 aa).

9-14 (SNNAGK) serves as a coordination point for substrate. Residues glutamate 41 and aspartate 70 each coordinate Mg(2+). The active-site Proton acceptor is the aspartate 70. Substrate contacts are provided by residues serine 71, 155 to 158 (FGYD), lysine 178, and 183 to 184 (HR).

It belongs to the HAM1 NTPase family. As to quaternary structure, homodimer. It depends on Mg(2+) as a cofactor.

The catalysed reaction is XTP + H2O = XMP + diphosphate + H(+). It catalyses the reaction dITP + H2O = dIMP + diphosphate + H(+). It carries out the reaction ITP + H2O = IMP + diphosphate + H(+). Pyrophosphatase that catalyzes the hydrolysis of nucleoside triphosphates to their monophosphate derivatives, with a high preference for the non-canonical purine nucleotides XTP (xanthosine triphosphate), dITP (deoxyinosine triphosphate) and ITP. Seems to function as a house-cleaning enzyme that removes non-canonical purine nucleotides from the nucleotide pool, thus preventing their incorporation into DNA/RNA and avoiding chromosomal lesions. The chain is dITP/XTP pyrophosphatase from Methylococcus capsulatus (strain ATCC 33009 / NCIMB 11132 / Bath).